A 150-amino-acid chain; its full sequence is Large ribosomal subunit protein bL9 (150 aa).

The protein belongs to the bacterial ribosomal protein bL9 family.

Functionally, binds to the 23S rRNA. The sequence is that of Large ribosomal subunit protein bL9 from Streptococcus mutans serotype c (strain ATCC 700610 / UA159).